The chain runs to 618 residues: Mitochondrial Rho GTPase 2 (618 aa).

The Cytoplasmic segment spans residues 1–591 (MKRDVRILLL…LNAVELGAAS (591 aa)). The Miro 1 domain maps to 2-168 (KRDVRILLLG…FYYAQKAVLH (167 aa)). The GTP site is built by glycine 16, lysine 17, threonine 18, and serine 19. Threonine 18 is a Mg(2+) binding site. The Mg(2+) site is built by proline 35 and aspartate 57. Residues serine 59, asparagine 118, lysine 119, aspartate 121, alanine 149, and lysine 150 each contribute to the GTP site. EF-hand domains lie at 184–219 (ACSR…CFGN) and 304–339 (LGYQ…FPCM). The Ca(2+) site is built by aspartate 197, aspartate 199, asparagine 201, glutamate 208, aspartate 317, aspartate 319, aspartate 321, and glutamate 328. The Miro 2 domain occupies 416-579 (RNVFLCKVLG…YTKLATAATF (164 aa)). The GTP site is built by glycine 428, glycine 430, lysine 431, serine 432, and alanine 433. Residue serine 432 coordinates Mg(2+). Glutamate 474 contributes to the Mg(2+) binding site. GTP is bound by residues lysine 528, aspartate 530, and cysteine 559. The helical; Anchor for type IV membrane protein transmembrane segment at 592–614 (FWLRVALGAAVTALVGFTLYRVL) threads the bilayer. At 615-618 (AKNK) the chain is on the mitochondrial intermembrane side.

This sequence belongs to the mitochondrial Rho GTPase family. In terms of assembly, homodimer.

It localises to the mitochondrion outer membrane. The enzyme catalyses GTP + H2O = GDP + phosphate + H(+). It catalyses the reaction ATP + H2O = ADP + phosphate + H(+). The catalysed reaction is UTP + H2O = UDP + phosphate + H(+). In terms of biological role, atypical mitochondrial nucleoside-triphosphatase (NTPase) involved in mitochondrial trafficking. Probably involved in control of anterograde transport of mitochondria and their subcellular distribution. Can hydrolyze GTP, ATP and UTP. The sequence is that of Mitochondrial Rho GTPase 2 (RHOT2) from Gallus gallus (Chicken).